Consider the following 546-residue polypeptide: Medium-chain-fatty-acid--CoA ligase (546 aa).

Thr185 contributes to the Mg(2+) binding site. 2 residues coordinate ATP: Trp235 and Thr329. Glu330 contacts Mg(2+). ATP contacts are provided by Asp417, Lys434, Lys438, and Trp443.

The protein belongs to the ATP-dependent AMP-binding enzyme family.

It localises to the cytoplasm. The catalysed reaction is a medium-chain fatty acid + ATP + CoA = a medium-chain fatty acyl-CoA + AMP + diphosphate. Its pathway is lipid metabolism; fatty acid metabolism. The polypeptide is Medium-chain-fatty-acid--CoA ligase (Ectopseudomonas oleovorans (Pseudomonas oleovorans)).